Consider the following 174-residue polypeptide: Adipose-secreted signaling protein (174 aa).

Residue alanine 2 is modified to N-acetylalanine. The residue at position 147 (threonine 147) is a Phosphothreonine.

This sequence belongs to the ADISSP family.

The protein localises to the secreted. Adipocyte-secreted protein (adipokine) that acts as a key regulator for white adipose tissue (WAT) thermogenesis and glucose homeostasis at least in part through activation of protein kinase A (PKA). The chain is Adipose-secreted signaling protein from Bos taurus (Bovine).